Reading from the N-terminus, the 139-residue chain is ATP synthase epsilon chain, chloroplastic (139 aa).

It belongs to the ATPase epsilon chain family. F-type ATPases have 2 components, CF(1) - the catalytic core - and CF(0) - the membrane proton channel. CF(1) has five subunits: alpha(3), beta(3), gamma(1), delta(1), epsilon(1). CF(0) has three main subunits: a, b and c.

Its subcellular location is the plastid. The protein localises to the chloroplast thylakoid membrane. Produces ATP from ADP in the presence of a proton gradient across the membrane. In Dictyota dichotoma, this protein is ATP synthase epsilon chain, chloroplastic.